We begin with the raw amino-acid sequence, 571 residues long: Glutamate--tRNA ligase (571 aa).

Positions 106 to 116 (PNPDGAFHLGN) match the 'HIGH' region motif.

It belongs to the class-I aminoacyl-tRNA synthetase family. Glutamate--tRNA ligase type 2 subfamily.

It localises to the cytoplasm. The catalysed reaction is tRNA(Glu) + L-glutamate + ATP = L-glutamyl-tRNA(Glu) + AMP + diphosphate. Its function is as follows. Catalyzes the attachment of glutamate to tRNA(Glu) in a two-step reaction: glutamate is first activated by ATP to form Glu-AMP and then transferred to the acceptor end of tRNA(Glu). The sequence is that of Glutamate--tRNA ligase from Pyrococcus abyssi (strain GE5 / Orsay).